A 101-amino-acid chain; its full sequence is Apolipoprotein C-II (101 aa).

The first 22 residues, 1 to 22 (MGIRYLLVLVLVLLVLGCEVQG), serve as a signal peptide directing secretion. A propeptide spanning residues 23–28 (AHMPQQ) is cleaved from the precursor. The interval 66–74 (TMDEKIREI) is lipid binding. The lipoprotein lipase cofactor stretch occupies residues 78 to 101 (STAAVSTYAGIFTDQLLSMLKGDQ).

It belongs to the apolipoprotein C2 family. Proapolipoprotein C-II is synthesized as a sialic acid containing glycoprotein which is subsequently desialylated prior to its proteolytic processing. Post-translationally, proapolipoprotein C-II, the major form found in plasma undergoes proteolytic cleavage of its N-terminal hexapeptide to generate apolipoprotein C-II, which occurs as the minor form in plasma.

The protein localises to the secreted. Functionally, component of chylomicrons, very low-density lipoproteins (VLDL), low-density lipoproteins (LDL), and high-density lipoproteins (HDL) in plasma. Plays an important role in lipoprotein metabolism as an activator of lipoprotein lipase. Both proapolipoprotein C-II and apolipoprotein C-II can activate lipoprotein lipase. This Neomonachus schauinslandi (Hawaiian monk seal) protein is Apolipoprotein C-II (APOC2).